The sequence spans 484 residues: Replication factor C large subunit (484 aa).

Residue 46–53 (GPPGSGKT) participates in ATP binding. The segment covering 463–478 (NADTKEKEKKDPKKQA) has biased composition (basic and acidic residues). The tract at residues 463–484 (NADTKEKEKKDPKKQATLDSFF) is disordered.

The protein belongs to the activator 1 small subunits family. RfcL subfamily. Heteromultimer composed of small subunits (RfcS) and large subunits (RfcL).

Functionally, part of the RFC clamp loader complex which loads the PCNA sliding clamp onto DNA. The protein is Replication factor C large subunit of Methanococcus maripaludis (strain C6 / ATCC BAA-1332).